We begin with the raw amino-acid sequence, 270 residues long: Sorting nexin-11 (270 aa).

The region spanning 16 to 132 (VITVRVQDPR…HLFLQSQLSV (117 aa)) is the PX domain. Residues Arg59, Lys85, and Arg99 each coordinate a 1,2-diacyl-sn-glycero-3-phospho-(1D-myo-inositol-3-phosphate). Residues 135–139 (IEACV) form an important for membrane trafficking region. The span at 168–177 (GSSHLAEGDQ) shows a compositional bias: basic and acidic residues. Disordered regions lie at residues 168–244 (GSSH…LSAS) and 251–270 (LGGG…VLEK). Pro residues predominate over residues 218–227 (LESPTLPPTS).

This sequence belongs to the sorting nexin family. In terms of assembly, monomer. Interacts with TRPV3; this interaction promotes TRPV3 trafficking from the cell membrane to lysosome for degradation.

It is found in the cell membrane. Its subcellular location is the endosome. The protein resides in the cytoplasm. In terms of biological role, phosphoinositide-binding protein involved in protein sorting and membrane trafficking in endosomes. Regulates the levels of TRPV3 by promoting its trafficking from the cell membrane to lysosome for degradation. This chain is Sorting nexin-11 (SNX11), found in Bos taurus (Bovine).